We begin with the raw amino-acid sequence, 201 residues long: uncharacterized protein (201 aa).

A run of 4 helical transmembrane segments spans residues 9-29 (YNVF…ILVA), 42-62 (FLFV…FFDV), 86-106 (SGVI…VVMV), and 126-146 (LPYL…SIGM). 2 stretches are compositionally biased toward basic and acidic residues: residues 165 to 174 (EPTDPNKTDN) and 182 to 191 (DENKKNEKEQ). The interval 165-201 (EPTDPNKTDNRAVVINLDENKKNEKEQSPPSAEMTSL) is disordered. The segment covering 192-201 (SPPSAEMTSL) has biased composition (polar residues).

It localises to the cell membrane. This is an uncharacterized protein from Mycoplasma genitalium (strain ATCC 33530 / DSM 19775 / NCTC 10195 / G37) (Mycoplasmoides genitalium).